The primary structure comprises 448 residues: Fibulin-5 (448 aa).

Positions 1–23 are cleaved as a signal peptide; sequence MPGIKRILTVTILALCLPSPGNA. An EGF-like 1; calcium-binding domain is found at 42–82; the sequence is DIDECRTIPEACRGDMMCVNQNGRYLCIPRTNPVYRGPYSN. 17 disulfides stabilise this stretch: Cys-46–Cys-59, Cys-53–Cys-68, Cys-131–Cys-144, Cys-138–Cys-153, Cys-155–Cys-166, Cys-172–Cys-181, Cys-177–Cys-190, Cys-192–Cys-205, Cys-211–Cys-221, Cys-217–Cys-230, Cys-232–Cys-245, Cys-251–Cys-262, Cys-258–Cys-271, Cys-273–Cys-286, Cys-292–Cys-305, Cys-299–Cys-314, and Cys-320–Cys-332. The Cell attachment site motif lies at 54-56; the sequence is RGD. Residues 127–167 form the EGF-like 2; calcium-binding domain; the sequence is DVDECATDSHQCNPTQICINTEGGYTCSCTDGYWLLEGQCL. The 39-residue stretch at 168-206 folds into the EGF-like 3; calcium-binding domain; the sequence is DIDECRYGYCQQLCANVPGSYSCTCNPGFTLNEDGRSCQ. Residues 207-246 form the EGF-like 4; calcium-binding domain; that stretch reads DVNECATENPCVQTCVNTYGSFICRCDPGYELEEDGVHCS. Residues 245 to 448 are interaction with LOXL1; it reads CSDMDECSFS…LRIYVSQYPF (204 aa). The EGF-like 5; calcium-binding domain maps to 247–287; that stretch reads DMDECSFSEFLCQHECVNQPGTYFCSCPPGYILLDDNRSCQ. N-linked (GlcNAc...) asparagine glycans are attached at residues Asn-283 and Asn-296. Residues 288–333 form the EGF-like 6; calcium-binding domain; the sequence is DINECEHRNHTCNLQQTCYNLQGGFKCIDPIRCEEPYLRISDNRCM.

Belongs to the fibulin family. As to quaternary structure, homodimer. Monomer, homodimerizes in presence of Ca(2+). Interacts with ELN. Interacts (via N-terminus) with the integrins ITGAV/ITGB3, ITGAV/ITGB5 and ITGA9/ITGB1. Interacts with FBN1 (via N-terminal domain). Forms a ternary complex with ELN and FBN1. Interacts with EFEMP2 with moderate affinity. Interacts with LOXL1. In terms of processing, N-glycosylated.

The protein resides in the secreted. The protein localises to the extracellular space. It localises to the extracellular matrix. Essential for elastic fiber formation, is involved in the assembly of continuous elastin (ELN) polymer and promotes the interaction of microfibrils and ELN. Stabilizes and organizes elastic fibers in the skin, lung and vasculature. Promotes adhesion of endothelial cells through interaction of integrins and the RGD motif. Vascular ligand for integrin receptors which may play a role in vascular development and remodeling. May act as an adapter that mediates the interaction between FBN1 and ELN. In Pongo abelii (Sumatran orangutan), this protein is Fibulin-5 (FBLN5).